A 149-amino-acid polypeptide reads, in one-letter code: Putative pre-16S rRNA nuclease (149 aa).

The protein belongs to the YqgF nuclease family.

It is found in the cytoplasm. In terms of biological role, could be a nuclease involved in processing of the 5'-end of pre-16S rRNA. This chain is Putative pre-16S rRNA nuclease, found in Burkholderia multivorans (strain ATCC 17616 / 249).